Reading from the N-terminus, the 562-residue chain is tRNA (guanine(37)-N(1))-methyltransferase (562 aa).

Residues 1–41 (MLFRRFLNLTTKTPHLQTFRARHYFRNMSCPELIPPPTVRG) constitute a mitochondrion transit peptide. S-adenosyl-L-methionine-binding positions include H243, 281 to 282 (DL), and N340. Positions 523–534 (AHIVAKKPEKKP) are enriched in basic and acidic residues. Residues 523–562 (AHIVAKKPEKKPLPAKPASKKNKNQANTKQVEAGLDKMQM) form a disordered region.

The protein belongs to the class I-like SAM-binding methyltransferase superfamily. TRM5/TYW2 family. Monomer.

The protein resides in the mitochondrion matrix. It localises to the nucleus. It is found in the cytoplasm. The catalysed reaction is guanosine(37) in tRNA + S-adenosyl-L-methionine = N(1)-methylguanosine(37) in tRNA + S-adenosyl-L-homocysteine + H(+). Specifically methylates the N1 position of guanosine-37 in various cytoplasmic and mitochondrial tRNAs. Methylation is not dependent on the nature of the nucleoside 5' of the target nucleoside. This is the first step in the biosynthesis of wybutosine (yW), a modified base adjacent to the anticodon of tRNAs and required for accurate decoding. This Aedes aegypti (Yellowfever mosquito) protein is tRNA (guanine(37)-N(1))-methyltransferase.